A 2117-amino-acid chain; its full sequence is Tudor domain-containing 6 (2117 aa).

5 Tudor domains span residues 62–118, 291–350, 527–584, 757–816, and 974–1030; these read DGNP…FFYL, AENL…FFRM, KPVV…FQQL, EPLL…FLKM, and PQTF…AGDI. The interval 1125 to 1216 is disordered; that stretch reads ASACKKESST…SSKPEVVKPK (92 aa). Residues 1127 to 1152 are compositionally biased toward basic and acidic residues; that stretch reads ACKKESSTGPKRDAIDQVPKSRESHA. 2 stretches are compositionally biased toward polar residues: residues 1153–1174 and 1181–1209; these read IQRS…STNG and DSGT…TSSK. 2 consecutive Tudor domains span residues 1282 to 1340 and 1485 to 1543; these read DIHE…FASF and CMPV…LSDV.

As to quaternary structure, interacts (via Tudor domain) with buc (when dimethylated on arginine residues); and may be responsible for recruitment of different protein complexes to germ plasm.

The protein resides in the cytoplasm. Tudor domain-containing protein involved in germ cell development, more specifically the formation of chromatoid body (during spermiogenesis), Balbiani body (during oogenesis), germ plasm (upon fertilization), and for proper miRNA expression and spliceosome maturation. Required for Balbiani body and germ plasm formation and mobility through interaction with dimethylated arginines in the prion-like protein Bucky ball (buc). Coordinates transcript deposition into future primordial germ cells. Interacts with known germ plasm mRNAs such as vasa, dazl, nanos3 and hook2. The chain is Tudor domain-containing 6 from Danio rerio (Zebrafish).